A 272-amino-acid chain; its full sequence is 2-succinyl-6-hydroxy-2,4-cyclohexadiene-1-carboxylate synthase (272 aa).

The protein belongs to the AB hydrolase superfamily. MenH family. In terms of assembly, monomer.

The catalysed reaction is 5-enolpyruvoyl-6-hydroxy-2-succinyl-cyclohex-3-ene-1-carboxylate = (1R,6R)-6-hydroxy-2-succinyl-cyclohexa-2,4-diene-1-carboxylate + pyruvate. It functions in the pathway quinol/quinone metabolism; 1,4-dihydroxy-2-naphthoate biosynthesis; 1,4-dihydroxy-2-naphthoate from chorismate: step 3/7. It participates in quinol/quinone metabolism; menaquinone biosynthesis. In terms of biological role, catalyzes a proton abstraction reaction that results in 2,5-elimination of pyruvate from 2-succinyl-5-enolpyruvyl-6-hydroxy-3-cyclohexene-1-carboxylate (SEPHCHC) and the formation of 2-succinyl-6-hydroxy-2,4-cyclohexadiene-1-carboxylate (SHCHC). This Yersinia pseudotuberculosis serotype O:1b (strain IP 31758) protein is 2-succinyl-6-hydroxy-2,4-cyclohexadiene-1-carboxylate synthase.